Reading from the N-terminus, the 337-residue chain is Sideroflexin-4 (337 aa).

Residue serine 2 is modified to N-acetylserine. Transmembrane regions (helical) follow at residues 111–131 (AAFL…LKGI), 133–153 (SVIL…SING), and 165–185 (SLLM…PQFV). Position 197 is an N6-acetyllysine (lysine 197). The next 2 membrane-spanning stretches (helical) occupy residues 251–271 (ASRI…TYFF) and 293–313 (VLAM…IGQI).

The protein belongs to the sideroflexin family.

It localises to the mitochondrion inner membrane. In terms of biological role, mitochondrial amino-acid transporter. Does not act as a serine transporter: not able to mediate transport of serine into mitochondria. The polypeptide is Sideroflexin-4 (Homo sapiens (Human)).